The primary structure comprises 360 residues: MSKQNHFLVINGKNCCVFRDENIAKVLPPVLGLEFVFGLLGNGLALWIFCFHLKSWKSSRIFLFNLAVADFLLIICLPFLTDNYVQNWDWRFGSIPCRVMLFMLAMNRQGSIIFLTVVAVDRYFRVVHPHHFLNKISNRTAAIISCFLWGITIGLTVHLLYTDMMTRNGDANLCSSFSICYTFRWHDAMFLLEFFLPLGIILFCSGRIIWSLRQRQMDRHVKIKRAINFIMVVAIVFVICFLPSVAVRIRIFWLLYKHNVRNCDIYSSVDLAFFTTLSFTYMNSMLDPVVYYFSSPSFPNFFSTCINRCLRRKTLGEPDNNRSTSVELTGDPSTIRSIPGALMTDPSEPGSPPYLASTSR.

Over 1–30 (MSKQNHFLVINGKNCCVFRDENIAKVLPPV) the chain is Extracellular. A helical transmembrane segment spans residues 31 to 51 (LGLEFVFGLLGNGLALWIFCF). The Cytoplasmic segment spans residues 52 to 60 (HLKSWKSSR). A helical membrane pass occupies residues 61 to 81 (IFLFNLAVADFLLIICLPFLT). Residues 82–98 (DNYVQNWDWRFGSIPCR) are Extracellular-facing. The cysteines at positions 97 and 174 are disulfide-linked. Residues 99-119 (VMLFMLAMNRQGSIIFLTVVA) traverse the membrane as a helical segment. The Cytoplasmic portion of the chain corresponds to 120 to 140 (VDRYFRVVHPHHFLNKISNRT). The helical transmembrane segment at 141-161 (AAIISCFLWGITIGLTVHLLY) threads the bilayer. Over 162–189 (TDMMTRNGDANLCSSFSICYTFRWHDAM) the chain is Extracellular. Residues 190-210 (FLLEFFLPLGIILFCSGRIIW) form a helical membrane-spanning segment. The Cytoplasmic segment spans residues 211-226 (SLRQRQMDRHVKIKRA). A helical transmembrane segment spans residues 227–247 (INFIMVVAIVFVICFLPSVAV). Over 248 to 270 (RIRIFWLLYKHNVRNCDIYSSVD) the chain is Extracellular. The chain crosses the membrane as a helical span at residues 271–291 (LAFFTTLSFTYMNSMLDPVVY). At 292–360 (YFSSPSFPNF…SPPYLASTSR (69 aa)) the chain is on the cytoplasmic side. Positions 320 to 360 (NNRSTSVELTGDPSTIRSIPGALMTDPSEPGSPPYLASTSR) are disordered. The segment covering 321–336 (NRSTSVELTGDPSTIR) has biased composition (polar residues). At S325 the chain carries Phosphoserine.

It belongs to the G-protein coupled receptor 1 family. As to expression, expressed in adipose tissue, lung and spleen.

The protein localises to the cell membrane. Its function is as follows. Acts as a high affinity receptor for both nicotinic acid (also known as niacin) and (D)-beta-hydroxybutyrate and mediates increased adiponectin secretion and decreased lipolysis through G(i)-protein-mediated inhibition of adenylyl cyclase. This pharmacological effect requires nicotinic acid doses that are much higher than those provided by a normal diet. Mediates nicotinic acid-induced apoptosis in mature neutrophils. Receptor activation by nicotinic acid results in reduced cAMP levels which may affect activity of cAMP-dependent protein kinase A and phosphorylation of target proteins, leading to neutrophil apoptosis. The rank order of potency for the displacement of nicotinic acid binding is 5-methyl pyrazole-3-carboxylic acid = pyridine-3-acetic acid &gt; acifran &gt; 5-methyl nicotinic acid = acipimox &gt;&gt; nicotinuric acid = nicotinamide. In Rattus norvegicus (Rat), this protein is Hydroxycarboxylic acid receptor 2 (Hcar2).